We begin with the raw amino-acid sequence, 532 residues long: Protein kinase domain-containing protein ppk9 (532 aa).

The Protein kinase domain occupies 23-274 (WLLGRTLGQG…VAEIMQHPWF (252 aa)). ATP contacts are provided by residues 29-37 (LGQGNLAKV) and lysine 52. The Proton acceptor role is filled by aspartate 145. Residues 316–346 (PSSSVGQIPQPTDHSALSPSKPMSISGTESP) are compositionally biased toward polar residues. A disordered region spans residues 316–349 (PSSSVGQIPQPTDHSALSPSKPMSISGTESPNPD).

The protein localises to the cytoplasm. It localises to the nucleus. Its subcellular location is the cytoskeleton. It is found in the microtubule organizing center. The protein resides in the spindle pole body. The chain is Protein kinase domain-containing protein ppk9 (ppk9) from Schizosaccharomyces pombe (strain 972 / ATCC 24843) (Fission yeast).